A 244-amino-acid polypeptide reads, in one-letter code: Orotidine 5'-phosphate decarboxylase (244 aa).

Substrate contacts are provided by residues Asp20, Lys42, 70–79 (DLKFFDIPAT), Thr125, Arg186, Gln195, Gly215, and Arg216. Lys72 acts as the Proton donor in catalysis.

This sequence belongs to the OMP decarboxylase family. Type 1 subfamily. Homodimer.

The catalysed reaction is orotidine 5'-phosphate + H(+) = UMP + CO2. It functions in the pathway pyrimidine metabolism; UMP biosynthesis via de novo pathway; UMP from orotate: step 2/2. Catalyzes the decarboxylation of orotidine 5'-monophosphate (OMP) to uridine 5'-monophosphate (UMP). The protein is Orotidine 5'-phosphate decarboxylase of Xylella fastidiosa (strain M23).